A 250-amino-acid chain; its full sequence is Developmental protein SEPALLATA 2 (250 aa).

The region spanning 3-57 is the MADS-box domain; the sequence is RGRVELKRIENKINRQVTFAKRRNGLLKKAYELSVLCDAEVSLIVFSNRGKLYEF. Residues 85-150 adopt a coiled-coil conformation; sequence AKELENSYRE…CIKTQYMLDQ (66 aa). The region spanning 88–178 is the K-box domain; the sequence is LENSYREYLK…SMKLEDMIGV (91 aa).

In terms of assembly, heterodimer with AGAMOUS capable of binding to CArG-box sequences. Interacts with TT16/AGL32.

The protein localises to the nucleus. Probable transcription factor. Functions with SEPALLATA1/AGL2 and SEPALLATA3/AGL9 to ensure proper development of petals, stamens and carpels and to prevent the indeterminate growth of the flower meristem. Forms a heterodimer via the K-box domain with AG, that could be involved in genes regulation during floral meristem development. This chain is Developmental protein SEPALLATA 2 (SEP2), found in Arabidopsis thaliana (Mouse-ear cress).